We begin with the raw amino-acid sequence, 226 residues long: MNSQGSAQKAGTLLLLLISNLLFCQNVQPLPICSAGDCQTSLRELFDRVVILSHYIHTLYTDMFIEFDKQYVQDREFMVKVINDCPTSSLATPEDKEQALKVPPEVLLNLILSLVQSSSDPLFQLITGVGGIQEAPEYILSRAKEIEEQNKQLLEGVEKIISQAYPEAKGNGIYFVWSQLPSLQGVDEESKILSLRNTIRCLRRDSHKVDNFLKVLRCQIAHQNNC.

An N-terminal signal peptide occupies residues 1–29 (MNSQGSAQKAGTLLLLLISNLLFCQNVQP). Cysteine 33 and cysteine 38 are disulfide-bonded. Serine 53 and serine 117 each carry phosphoserine. 2 disulfides stabilise this stretch: cysteine 85–cysteine 201 and cysteine 218–cysteine 226.

This sequence belongs to the somatotropin/prolactin family. Interacts with PRLR.

It localises to the secreted. Prolactin acts primarily on the mammary gland by promoting lactation. This is Prolactin (Prl) from Mus musculus (Mouse).